Consider the following 363-residue polypeptide: Galanin receptor 2a (363 aa).

At 1–23 the chain is on the extracellular side; it reads MNASQQIHVFSSHWKVESVIISL. A helical membrane pass occupies residues 24 to 44; the sequence is IFSMIFLVGTVGNCLVLAVLI. The Cytoplasmic segment spans residues 45–54; the sequence is RNGQMNTKST. The helical transmembrane segment at 55–75 threads the bilayer; it reads NLFILNLGLADLCFIVFCVPL. Over 76 to 94 the chain is Extracellular; sequence QATIYTMDEWVFGAFVCKA. A disulfide bond links cysteine 92 and cysteine 169. The helical transmembrane segment at 95-115 threads the bilayer; that stretch reads VHFIIYLTMYASIFTLAAVSL. Topologically, residues 116–135 are cytoplasmic; sequence DRYLAIRYPLRSRETRTPRN. The chain crosses the membrane as a helical span at residues 136–156; that stretch reads ALTSISLVWALSLFFSSPYLS. At 157–179 the chain is on the extracellular side; it reads YYQQMDLDGTTVCIPAWSVHHRQ. A helical transmembrane segment spans residues 180–200; it reads AMDICTFIFGYLIPVLILGIT. The Cytoplasmic segment spans residues 201–230; it reads YARTIRYLWTSVDPMQDMSESRKAKRKVTK. A helical membrane pass occupies residues 231 to 251; that stretch reads MIIIVAVLFCLCWLPHHLVIL. The Extracellular segment spans residues 252 to 268; sequence CMWFGHFPLNHTTYVLR. Residues 269 to 289 form a helical membrane-spanning segment; it reads ILSHLVAYANSCLNPIVYALV. The Cytoplasmic portion of the chain corresponds to 290-363; sequence SKHFRKGFKK…TSAFMTFNVT (74 aa).

The protein belongs to the G-protein coupled receptor 1 family. In terms of tissue distribution, expressed in neurons in the ventral area of the interpeduncular nucleus (IPN) where expression often overlaps with spx1.

Its subcellular location is the membrane. Its function is as follows. Receptor for the hormone galanin. Receptor for the hormones spexin-1 and spexin-2. This chain is Galanin receptor 2a, found in Danio rerio (Zebrafish).